Consider the following 213-residue polypeptide: Phosphatidylethanolamine N-methyltransferase A (213 aa).

Topologically, residues 1–21 are lumenal; that stretch reads MIVEHAIDYIDYLMNYVDFTE. Positions 22–42 form an intramembrane region, helical; that stretch reads KYFLLTIACVVFNPTWWNITA. At 43–54 the chain is on the lumenal side; the sequence is RMEYKTKFMTKI. The helical transmembrane segment at 55–75 threads the bilayer; sequence CGSKENGCYLLAFLIFSLGIL. Residues 76–102 are Cytoplasmic-facing; the sequence is RDWLFSEALIRQPIFQEFDRFEVEVLS. Residues 103–123 traverse the membrane as a helical segment; sequence YILYGFGGILVLAAYLKLGIT. S-adenosyl-L-methionine is bound at residue 107–109; it reads GFG. At 124–166 the chain is on the lumenal side; it reads GTYLGDYFGILMKERVTGFPFNVMNNPMYNGSVMLFIAHALSY. Residues 167 to 187 traverse the membrane as a helical segment; sequence KSVAGLVLSFVVYVVYKFALI. Topologically, residues 188-213 are cytoplasmic; it reads FEESFTNYIYSTAAANAAKKNKSKSK. An S-adenosyl-L-methionine-binding site is contributed by 189–190; it reads EE.

Belongs to the class VI-like SAM-binding methyltransferase superfamily. PEMT/PEM2 methyltransferase family.

It is found in the endoplasmic reticulum membrane. It localises to the mitochondrion membrane. The catalysed reaction is a 1,2-diacyl-sn-glycero-3-phospho-N-methylethanolamine + S-adenosyl-L-methionine = a 1,2-diacyl-sn-glycero-3-phospho-N,N-dimethylethanolamine + S-adenosyl-L-homocysteine + H(+). The enzyme catalyses a 1,2-diacyl-sn-glycero-3-phospho-N,N-dimethylethanolamine + S-adenosyl-L-methionine = a 1,2-diacyl-sn-glycero-3-phosphocholine + S-adenosyl-L-homocysteine + H(+). It catalyses the reaction a 1,2-diacyl-sn-glycero-3-phosphoethanolamine + S-adenosyl-L-methionine = a 1,2-diacyl-sn-glycero-3-phospho-N-methylethanolamine + S-adenosyl-L-homocysteine + H(+). Its pathway is phospholipid metabolism; phosphatidylcholine biosynthesis. Catalyzes the three sequential steps of the methylation pathway of phosphatidylcholine biosynthesis, the SAM-dependent methylation of phosphatidylethanolamine (PE) to phosphatidylmonomethylethanolamine (PMME), PMME to phosphatidyldimethylethanolamine (PDME), and PDME to phosphatidylcholine (PC). In Dictyostelium discoideum (Social amoeba), this protein is Phosphatidylethanolamine N-methyltransferase A (pemtA).